Consider the following 272-residue polypeptide: Ethanolamine ammonia-lyase small subunit (272 aa).

The adenosylcob(III)alamin site is built by Val161, Glu182, and Cys211.

It belongs to the EutC family. In terms of assembly, the basic unit is a heterodimer which dimerizes to form tetramers. The heterotetramers trimerize; 6 large subunits form a core ring with 6 small subunits projecting outwards. Adenosylcob(III)alamin serves as cofactor.

The protein resides in the bacterial microcompartment. It catalyses the reaction ethanolamine = acetaldehyde + NH4(+). It participates in amine and polyamine degradation; ethanolamine degradation. Functionally, catalyzes the deamination of various vicinal amino-alcohols to oxo compounds. Allows this organism to utilize ethanolamine as the sole source of nitrogen and carbon in the presence of external vitamin B12. This chain is Ethanolamine ammonia-lyase small subunit, found in Xanthomonas campestris pv. campestris (strain B100).